The sequence spans 288 residues: UPF0276 protein VP3015 (288 aa).

This sequence belongs to the UPF0276 family.

The protein is UPF0276 protein VP3015 of Vibrio parahaemolyticus serotype O3:K6 (strain RIMD 2210633).